Consider the following 172-residue polypeptide: Adenine phosphoribosyltransferase (172 aa).

Belongs to the purine/pyrimidine phosphoribosyltransferase family. Homodimer.

Its subcellular location is the cytoplasm. It carries out the reaction AMP + diphosphate = 5-phospho-alpha-D-ribose 1-diphosphate + adenine. It participates in purine metabolism; AMP biosynthesis via salvage pathway; AMP from adenine: step 1/1. Its function is as follows. Catalyzes a salvage reaction resulting in the formation of AMP, that is energically less costly than de novo synthesis. The chain is Adenine phosphoribosyltransferase from Prochlorococcus marinus (strain SARG / CCMP1375 / SS120).